Here is a 244-residue protein sequence, read N- to C-terminus: Uridylate kinase (244 aa).

17–20 (KVSG) provides a ligand contact to ATP. Residues 25-30 (GDKGFG) form an involved in allosteric activation by GTP region. Residue Gly59 participates in UMP binding. Residues Gly60 and Arg64 each contribute to the ATP site. UMP is bound by residues Asp80 and 141 to 148 (VGNPFFTT). 4 residues coordinate ATP: Thr168, Gln169, Tyr174, and Asp177.

Belongs to the UMP kinase family. In terms of assembly, homohexamer.

The protein localises to the cytoplasm. It catalyses the reaction UMP + ATP = UDP + ADP. It participates in pyrimidine metabolism; CTP biosynthesis via de novo pathway; UDP from UMP (UMPK route): step 1/1. Allosterically activated by GTP. Inhibited by UTP. Its function is as follows. Catalyzes the reversible phosphorylation of UMP to UDP. The sequence is that of Uridylate kinase from Ehrlichia ruminantium (strain Welgevonden).